The chain runs to 435 residues: GTPase Der (435 aa).

EngA-type G domains lie at 4 to 167 (KIVA…SKND) and 175 to 350 (TKIA…QSLS). Residues 10–17 (GRPNVGKS), 57–61 (DTGGI), 119–122 (NKYD), 181–188 (GRPNVGKS), 228–232 (DTAGI), and 293–296 (NKWD) contribute to the GTP site. The KH-like domain occupies 351–435 (VKVKTYVLNE…PINLIFRERK (85 aa)).

This sequence belongs to the TRAFAC class TrmE-Era-EngA-EngB-Septin-like GTPase superfamily. EngA (Der) GTPase family. In terms of assembly, associates with the 50S ribosomal subunit.

In terms of biological role, GTPase that plays an essential role in the late steps of ribosome biogenesis. This chain is GTPase Der, found in Mycoplasma mycoides subsp. mycoides SC (strain CCUG 32753 / NCTC 10114 / PG1).